Consider the following 488-residue polypeptide: Probable cytosol aminopeptidase (488 aa).

Mn(2+)-binding residues include lysine 254 and aspartate 259. The active site involves lysine 266. Residues aspartate 277, aspartate 336, and glutamate 338 each contribute to the Mn(2+) site. The active site involves arginine 340.

The protein belongs to the peptidase M17 family. Mn(2+) serves as cofactor.

It localises to the cytoplasm. The catalysed reaction is Release of an N-terminal amino acid, Xaa-|-Yaa-, in which Xaa is preferably Leu, but may be other amino acids including Pro although not Arg or Lys, and Yaa may be Pro. Amino acid amides and methyl esters are also readily hydrolyzed, but rates on arylamides are exceedingly low.. It carries out the reaction Release of an N-terminal amino acid, preferentially leucine, but not glutamic or aspartic acids.. In terms of biological role, presumably involved in the processing and regular turnover of intracellular proteins. Catalyzes the removal of unsubstituted N-terminal amino acids from various peptides. This Roseiflexus castenholzii (strain DSM 13941 / HLO8) protein is Probable cytosol aminopeptidase.